A 437-amino-acid chain; its full sequence is Elongation factor Tu, mitochondrial (437 aa).

Residues 1–38 (MSALLPRLLTRTAFKASGKLLRLSSVISRTFSQTTTSY) constitute a mitochondrion transit peptide. Residues 46–242 (KPHVNIGTIG…AVDEYIPTPE (197 aa)) enclose the tr-type G domain. The segment at 55-62 (GHVDHGKT) is G1. 55–62 (GHVDHGKT) serves as a coordination point for GTP. The segment at 96-100 (GITIS) is G2. Residues 117 to 120 (DCPG) form a G3 region. GTP-binding positions include 117-121 (DCPGH) and 172-175 (NKVD). The segment at 172-175 (NKVD) is G4. The segment at 210-212 (SAL) is G5.

It belongs to the TRAFAC class translation factor GTPase superfamily. Classic translation factor GTPase family. EF-Tu/EF-1A subfamily. In terms of processing, the precursor is processed in two steps involving mitochondrial intermediate peptidase (MIP) and mitochondrial processing peptidase (MPP).

Its subcellular location is the mitochondrion. It functions in the pathway protein biosynthesis; polypeptide chain elongation. In terms of biological role, G-protein that, in its active GTP-bound form, binds to and delivers aminoacyl-tRNA to the A-site of ribosomes during protein biosynthesis. In the presence of a correct codon-anticodon match between the aminoacyl-tRNA and the A-site codon of the ribosome-bound mRNA, the ribosome acts as a GTPase activator and the GTP is hydrolyzed. The inactive GDP-bound form leaves the ribosome and must be recycled before binding another molecule of aminoacyl-tRNA. Required for mitochondrial protein biosynthesis and maintenance of mitochondrial DNA. The protein is Elongation factor Tu, mitochondrial (TUF1) of Saccharomyces cerevisiae (strain ATCC 204508 / S288c) (Baker's yeast).